Here is a 3027-residue protein sequence, read N- to C-terminus: DmX-like protein 1 (3027 aa).

WD repeat units lie at residues Phe-108 to Glu-145, Lys-166 to Val-206, and Ala-229 to Leu-277. 4 positions are modified to phosphoserine: Ser-324, Ser-422, Ser-425, and Ser-436. Residues Pro-420–Asp-433 are compositionally biased toward polar residues. A disordered region spans residues Pro-420–Asn-450. One copy of the WD 4 repeat lies at Asp-476–Pro-516. Residues Lys-563 to Ser-584 are disordered. At Ser-574 the chain carries Phosphoserine. WD repeat units lie at residues Gly-580–Phe-621, Ser-628–Asp-665, and Gly-848–Ser-895. Ser-918 and Ser-924 each carry phosphoserine. WD repeat units lie at residues Pro-968–Ala-1010, Ser-1134–Gln-1175, and Gly-1211–Ile-1251. Ser-1830, Ser-1896, Ser-1908, and Ser-1970 each carry phosphoserine. 2 disordered regions span residues Pro-2367–Pro-2412 and Ser-2446–Asp-2468. Over residues Asp-2451 to Asp-2468 the composition is skewed to acidic residues. 6 WD repeats span residues Lys-2742–Arg-2783, Gly-2785–Thr-2824, Cys-2836–Leu-2878, Cys-2884–Leu-2923, Ser-2926–Thr-2965, and Asn-2978–Asn-3016.

In terms of tissue distribution, expressed in bone, breast, eye, foreskin, heart, parathyroid, small intestine, testis, tonsils, placenta and uterus.

The protein is DmX-like protein 1 (DMXL1) of Homo sapiens (Human).